The sequence spans 458 residues: UDP-N-acetylmuramate--L-alanine ligase (458 aa).

ATP is bound at residue 118 to 124 (GTHGKTT).

Belongs to the MurCDEF family.

It localises to the cytoplasm. It catalyses the reaction UDP-N-acetyl-alpha-D-muramate + L-alanine + ATP = UDP-N-acetyl-alpha-D-muramoyl-L-alanine + ADP + phosphate + H(+). It participates in cell wall biogenesis; peptidoglycan biosynthesis. Functionally, cell wall formation. In Clostridium novyi (strain NT), this protein is UDP-N-acetylmuramate--L-alanine ligase.